The chain runs to 1032 residues: Toll-like receptor 9 (1032 aa).

The signal sequence occupies residues 1–25 (MVLRRRTLHPLSLLVQAAVLAETLA). Residues 26–818 (LGTLPAFLPC…LCLDEVLSWD (793 aa)) lie on the Extracellular side of the membrane. An intrachain disulfide couples Cys-35 to Cys-45. DNA is bound at residue 47–51 (WLFLK). LRR repeat units follow at residues 62-85 (CSNI…DFVH), 87-110 (SNLR…HFSC), 122-147 (MRTL…SLVN), 150-166 (LSHT…LAGL), 167-190 (YSLR…AVKV), 198-221 (LSNL…LPPS), 223-242 (EYLL…DLAN), 243-268 (LTSL…CIEC), 283-306 (LSHL…WFQG), 308-332 (VNLS…AFQN), 333-356 (LTRL…RLHL), 363-386 (LVSL…TLRW), 390-413 (LPKL…IFGT), 415-440 (RALR…TPEE), 471-495 (CKNF…MFVN), 497-520 (SRLQ…QFLP), 521-544 (LTNL…SFSE), 546-573 (PQLQ…SFVT), 575-599 (LSML…LNSN), 601-623 (VRFL…LYLH), 628-651 (LSGL…NLDN), 653-676 (PKSL…SLSF), 677-700 (LPNL…TLPN), 702-724 (TLLQ…FFAL), 725-748 (AVEL…WFGP), and 750-773 (VMNL…AFVD). Asn-64 is a glycosylation site (N-linked (GlcNAc...) asparagine). DNA contacts are provided by residues 72–77 (SNRIHH) and 95–109 (KWNC…LHFS). Cysteines 98 and 110 form a disulfide. The N-linked (GlcNAc...) asparagine glycan is linked to Asn-129. Tyr-132 is a DNA binding site. The N-linked (GlcNAc...) asparagine glycan is linked to Asn-147. Cysteines 178 and 184 form a disulfide. 179–181 (YYK) provides a ligand contact to DNA. Asn-200 carries an N-linked (GlcNAc...) asparagine glycan. Position 208 (Tyr-208) interacts with DNA. N-linked (GlcNAc...) asparagine glycans are attached at residues Asn-210 and Asn-242. Cystine bridges form between Cys-255/Cys-268 and Cys-258/Cys-265. Residues Cys-258 and Cys-265 are each lipidated (S-palmitoyl cysteine). Residues Asn-300, Asn-309, Asn-332, and Asn-340 are each glycosylated (N-linked (GlcNAc...) asparagine). Residues 430–462 (PSTLSEATPEEADDAEQEELLSADPHPAPLSTP) form a disordered region. A compositionally biased stretch (acidic residues) spans 437–450 (TPEEADDAEQEELL). An intrachain disulfide couples Cys-471 to Cys-501. 2 N-linked (GlcNAc...) asparagine glycosylation sites follow: Asn-495 and Asn-514. Residue Asn-568 is glycosylated (N-linked (GlcNAc...) asparagine). Asn-670, Asn-695, and Asn-700 each carry an N-linked (GlcNAc...) asparagine glycan. Asn-732 and Asn-752 each carry an N-linked (GlcNAc...) asparagine glycan. Cystine bridges form between Cys-765–Cys-791 and Cys-767–Cys-810. The helical transmembrane segment at 819 to 839 (CFGLSLLAVAVGMVVPILHHL) threads the bilayer. Topologically, residues 840-1032 (CGWDVWYCFH…QNFCRGPTAE (193 aa)) are cytoplasmic. Residues 868 to 1013 (LPYDAFVVFD…GFWAQLSTAL (146 aa)) enclose the TIR domain.

It belongs to the Toll-like receptor family. As to quaternary structure, monomer and homodimer. Exists as a monomer in the absence of unmethylated cytidine-phosphate-guanosine (CpG) ligand. Proteolytic processing of an insertion loop (Z-loop) is required for homodimerization upon binding to the unmethylated CpG ligand leading to its activation. Interacts with MYD88 via their respective TIR domains. Interacts with BTK. Interacts (via transmembrane domain) with UNC93B1. Interacts with CD300LH; the interaction may promote full activation of TLR9-triggered innate responses. Interacts with CNPY3 and HSP90B1; this interaction is required for proper folding in the endoplasmic reticulum. Interacts with SMPDL3B. Interacts with CD82; this interaction is essential for TLR9-dependent myddosome formation in response to CpG stimulation. Activated by proteolytic cleavage of the flexible loop between repeats LRR14 and LRR15 within the ectodomain. Cleavage requires UNC93B1. Proteolytically processed by first removing the majority of the ectodomain by either asparagine endopeptidase (AEP) or a cathepsin followed by a trimming event that is solely cathepsin mediated and required for optimal receptor signaling. Post-translationally, palmitoylated by ZDHHC3 in the Golgi regulates TLR9 trafficking from the Golgi to endosomes. Depalmitoylation by PPT1 controls the release of TLR9 from UNC93B1 in endosomes. Expressed in the basolateral region of gastric epithelial cells with high levels detected in antrum and body mucosa (at protein level). Detected in spleen and stomach at higher levels in C57BL/6 mice than BALB/C.

It is found in the endoplasmic reticulum membrane. It localises to the endosome. The protein localises to the lysosome. The protein resides in the cytoplasmic vesicle. Its subcellular location is the phagosome. Its function is as follows. Key component of innate and adaptive immunity. TLRs (Toll-like receptors) control host immune response against pathogens through recognition of molecular patterns specific to microorganisms. TLR9 is a nucleotide-sensing TLR which is activated by unmethylated cytidine-phosphate-guanosine (CpG) dinucleotides. Acts via MYD88 and TRAF6, leading to NF-kappa-B activation, cytokine secretion and the inflammatory response. Plays a role in defense against systemic mouse cytomegalovirus infection. Controls lymphocyte response to Helicobacter infection. Upon CpG stimulation, induces B-cell proliferation, activation, survival and antibody production. The protein is Toll-like receptor 9 (Tlr9) of Mus musculus (Mouse).